A 1799-amino-acid chain; its full sequence is Putative neural-cadherin 2 (1799 aa).

Residues Asn-13, Asn-64, Asn-86, Asn-118, Asn-195, Asn-260, Asn-264, Asn-283, and Asn-377 are each glycosylated (N-linked (GlcNAc...) asparagine). 7 consecutive Cadherin domains span residues 37–136 (DRFL…PPVF), 137–252 (DRQT…APQF), 253–364 (PQGI…PPQF), 368–485 (EWVT…VPKF), 486–590 (DREH…APTF), 590–709 (FAQD…QPGS), and 708–812 (GSKS…AGSM). Residues Asn-601, Asn-793, Asn-910, Asn-948, and Asn-969 are each glycosylated (N-linked (GlcNAc...) asparagine). One can recognise an EGF-like 1 domain in the interval 973–1010 (QDHNCRTHLCYNGGRCVETRNGPKCVACPVGYNGPRCQ). 7 disulfide bridges follow: Cys-977–Cys-988, Cys-982–Cys-997, Cys-1000–Cys-1009, Cys-1191–Cys-1217, Cys-1224–Cys-1239, Cys-1233–Cys-1248, and Cys-1250–Cys-1259. The Laminin G-like 1 domain occupies 1011-1217 (QSTRSFRGNG…ALARNSFPAC (207 aa)). Positions 1220–1260 (TDEVCLKTEHTARCWEHGNCVASLVQAKCHCQPGWMGPGCN) constitute an EGF-like 2 domain. One can recognise a Laminin G-like 2 domain in the interval 1263 to 1454 (TIPTTFKAQS…TMARNLERNC (192 aa)). N-linked (GlcNAc...) asparagine glycosylation is found at Asn-1376 and Asn-1437. 4 disulfide bridges follow: Cys-1419–Cys-1454, Cys-1501–Cys-1512, Cys-1506–Cys-1523, and Cys-1525–Cys-1534. Residues 1497 to 1535 (DRNECLDLPCLNGATCINLEPRLRYRCICPEGYWGENCE) form the EGF-like 3; calcium-binding domain. Residues 1549 to 1569 (ALGAIFVCLIIILILALIFVL) traverse the membrane as a helical segment. Positions 1726-1799 (ASSQLPSDGG…PLPEVDKVVL (74 aa)) are disordered. Gly residues-rich tracts occupy residues 1733–1744 (DGGGGSGDGPGP), 1752–1763 (LGGGGTGGGSGI), and 1775–1786 (SGAGPGGGGGSS).

It is found in the cell membrane. In terms of biological role, cadherins are calcium-dependent cell adhesion proteins. They preferentially interact with themselves in a homophilic manner in connecting cells. In Drosophila melanogaster (Fruit fly), this protein is Putative neural-cadherin 2 (CadN2).